The sequence spans 193 residues: Lipopolysaccharide core heptose(II)-phosphate phosphatase (193 aa).

Residues 1 to 25 (MKLKKHVAVLLISFLCLIGLVTQHA) form the signal peptide.

It belongs to the phosphoglycerate mutase family. Ais subfamily.

Its subcellular location is the periplasm. It functions in the pathway bacterial outer membrane biogenesis; lipopolysaccharide metabolism. Its function is as follows. Catalyzes the dephosphorylation of heptose(II) of the outer membrane lipopolysaccharide core. This Escherichia fergusonii (strain ATCC 35469 / DSM 13698 / CCUG 18766 / IAM 14443 / JCM 21226 / LMG 7866 / NBRC 102419 / NCTC 12128 / CDC 0568-73) protein is Lipopolysaccharide core heptose(II)-phosphate phosphatase.